Reading from the N-terminus, the 352-residue chain is MVFRIASSPYTHNQRQTSRIMLLVLLAAVPGIAAQLWFFGWGTLVQILLASVSALLAEALVLKLRKQSVAATLKDNSALLTGLLLAVSIPPLAPWWMVVLGTVFAVIIAKQLYGGLGQNPFNPAMIGYVVLLISFPVQMTSWLPPHEIAVNIPGFIDAIQVIFSGHTASGGDMNTLRLGIDGISQATPLDTFKTSVRAGHSVEQIMQYPIYSGILAGAGWQWVNLAWLAGGVWLLWQKAIRWHIPLSFLVTLALCATLGWLFSPETLAAPQIHLLSGATMLGAFFILTDPVTASTTNRGRLIFGALAGLLVWLIRSFGGYPDGVAFAVLLANITVPLIDYYTRPRVYGHRKG.

5 consecutive transmembrane segments (helical) span residues 20 to 40 (IMLL…WFFG), 42 to 62 (GTLV…ALVL), 78 to 109 (ALLT…VIIA), 123 to 143 (PAMI…TSWL), and 148 to 168 (IAVN…GHTA). The residue at position 187 (Thr187) is an FMN phosphoryl threonine. 5 helical membrane-spanning segments follow: residues 214-234 (ILAG…GVWL), 242-262 (WHIP…GWLF), 267-287 (LAAP…FFIL), 301-321 (LIFG…GGYP), and 322-342 (DGVA…DYYT).

The protein belongs to the NqrB/RnfD family. As to quaternary structure, the complex is composed of six subunits: RsxA, RsxB, RsxC, RsxD, RsxE and RsxG. FMN is required as a cofactor.

Its subcellular location is the cell inner membrane. Functionally, part of a membrane-bound complex that couples electron transfer with translocation of ions across the membrane. Required to maintain the reduced state of SoxR. This Escherichia coli O157:H7 protein is Ion-translocating oxidoreductase complex subunit D.